A 472-amino-acid chain; its full sequence is Protein nucleotidyltransferase YdiU (472 aa).

Residues glycine 86, glycine 88, arginine 89, lysine 109, aspartate 121, glycine 122, arginine 172, and arginine 179 each coordinate ATP. Aspartate 244 functions as the Proton acceptor in the catalytic mechanism. Mg(2+)-binding residues include asparagine 245 and aspartate 254. Position 254 (aspartate 254) interacts with ATP.

It belongs to the SELO family. It depends on Mg(2+) as a cofactor. Mn(2+) is required as a cofactor.

It catalyses the reaction L-seryl-[protein] + ATP = 3-O-(5'-adenylyl)-L-seryl-[protein] + diphosphate. The catalysed reaction is L-threonyl-[protein] + ATP = 3-O-(5'-adenylyl)-L-threonyl-[protein] + diphosphate. The enzyme catalyses L-tyrosyl-[protein] + ATP = O-(5'-adenylyl)-L-tyrosyl-[protein] + diphosphate. It carries out the reaction L-histidyl-[protein] + UTP = N(tele)-(5'-uridylyl)-L-histidyl-[protein] + diphosphate. It catalyses the reaction L-seryl-[protein] + UTP = O-(5'-uridylyl)-L-seryl-[protein] + diphosphate. The catalysed reaction is L-tyrosyl-[protein] + UTP = O-(5'-uridylyl)-L-tyrosyl-[protein] + diphosphate. Nucleotidyltransferase involved in the post-translational modification of proteins. It can catalyze the addition of adenosine monophosphate (AMP) or uridine monophosphate (UMP) to a protein, resulting in modifications known as AMPylation and UMPylation. The sequence is that of Protein nucleotidyltransferase YdiU from Ruegeria pomeroyi (strain ATCC 700808 / DSM 15171 / DSS-3) (Silicibacter pomeroyi).